A 175-amino-acid polypeptide reads, in one-letter code: Sialidase 85-1.3 (175 aa).

This sequence belongs to the glycosyl hydrolase 33 family.

It carries out the reaction Hydrolysis of alpha-(2-&gt;3)-, alpha-(2-&gt;6)-, alpha-(2-&gt;8)- glycosidic linkages of terminal sialic acid residues in oligosaccharides, glycoproteins, glycolipids, colominic acid and synthetic substrates.. Functionally, developmentally regulated neuraminidase implicated in parasite invasion of cells. May contribute to the pathology during T.cruzi infection by cleaving sialic acid from cells of the immune system. This Trypanosoma cruzi protein is Sialidase 85-1.3 (SA85-1.3).